The chain runs to 314 residues: Probable carboxylesterase 2 (314 aa).

The Involved in the stabilization of the negatively charged intermediate by the formation of the oxyanion hole motif lies at 79–81 (HGG). Catalysis depends on residues Ser-158, Asp-254, and His-286.

This sequence belongs to the 'GDXG' lipolytic enzyme family. As to expression, expressed in roots and flowers.

The enzyme catalyses a carboxylic ester + H2O = an alcohol + a carboxylate + H(+). In terms of biological role, carboxylesterase acting on esters with varying acyl chain length. This is Probable carboxylesterase 2 (CXE2) from Arabidopsis thaliana (Mouse-ear cress).